We begin with the raw amino-acid sequence, 689 residues long: Glycine--tRNA ligase beta subunit (689 aa).

It belongs to the class-II aminoacyl-tRNA synthetase family. Tetramer of two alpha and two beta subunits.

It is found in the cytoplasm. It carries out the reaction tRNA(Gly) + glycine + ATP = glycyl-tRNA(Gly) + AMP + diphosphate. This Cronobacter sakazakii (strain ATCC BAA-894) (Enterobacter sakazakii) protein is Glycine--tRNA ligase beta subunit.